A 407-amino-acid polypeptide reads, in one-letter code: Polygalacturonase (407 aa).

Positions 1–26 (MAPHLNIVPSMFVLLLLFISASKVQS) are cleaved as a signal peptide. PbH1 repeat units follow at residues 180–206 (CKNI…HMGK) and 207–228 (SEGV…SIGD). A glycan (N-linked (GlcNAc...) asparagine) is linked at Asn-182. The active-site Proton donor is the Asp-221. A disulfide bridge connects residues Cys-223 and Cys-240. His-244 is an active-site residue. PbH1 repeat units follow at residues 260-281 (VEGI…RIKT) and 290-311 (VSEI…LIDQ). Asn-267, Asn-272, Asn-302, and Asn-331 each carry an N-linked (GlcNAc...) asparagine glycan. 2 disulfide bridges follow: Cys-351–Cys-357 and Cys-379–Cys-395. One copy of the PbH1 5 repeat lies at 357-384 (CQNVELADIDIKHNGAEPATSQCLNVKP).

It belongs to the glycosyl hydrolase 28 family. In terms of tissue distribution, pollen.

The protein localises to the secreted. The protein resides in the cell wall. It catalyses the reaction (1,4-alpha-D-galacturonosyl)n+m + H2O = (1,4-alpha-D-galacturonosyl)n + (1,4-alpha-D-galacturonosyl)m.. In terms of biological role, may function in the depolymerization of the pectin in its walls during pollen tube elongation, or in that of the pistil during pollination. This Gossypium hirsutum (Upland cotton) protein is Polygalacturonase (G9).